A 21-amino-acid polypeptide reads, in one-letter code: 23S rRNA methylase leader peptide (21 aa).

Functionally, involved in erythromycin resistance. In Corynebacterium diphtheriae, this protein is 23S rRNA methylase leader peptide.